A 186-amino-acid chain; its full sequence is Threonylcarbamoyl-AMP synthase (186 aa).

The YrdC-like domain occupies 2-186 (PNEFELAVAA…ARTGAIIRPS (185 aa)).

It belongs to the SUA5 family. TsaC subfamily.

The protein localises to the cytoplasm. It catalyses the reaction L-threonine + hydrogencarbonate + ATP = L-threonylcarbamoyladenylate + diphosphate + H2O. Required for the formation of a threonylcarbamoyl group on adenosine at position 37 (t(6)A37) in tRNAs that read codons beginning with adenine. Catalyzes the conversion of L-threonine, HCO(3)(-)/CO(2) and ATP to give threonylcarbamoyl-AMP (TC-AMP) as the acyladenylate intermediate, with the release of diphosphate. The sequence is that of Threonylcarbamoyl-AMP synthase from Aeromonas hydrophila subsp. hydrophila (strain ATCC 7966 / DSM 30187 / BCRC 13018 / CCUG 14551 / JCM 1027 / KCTC 2358 / NCIMB 9240 / NCTC 8049).